Reading from the N-terminus, the 300-residue chain is Apolipoprotein E (300 aa).

Positions 1-18 (MKVLWAVLVVTLLAGCQA) are cleaved as a signal peptide. Residues 74–246 (VLMEDTMKEV…RLDEVREQME (173 aa)) are 8 X 22 AA approximate tandem repeats. Repeat copies occupy residues 75–95 (LMED…QELA), 96–117 (PMAE…ARLG), 118–139 (ADME…SMLG), 140–161 (HSAE…KRLL), 162–183 (RDAE…EGAE), 184–205 (RSVS…LRTA), 206–224 (ALTS…ERLR), and 225–243 (GRLE…EVRE). Methionine sulfoxide is present on Met-137. Residue Ser-141 is modified to Phosphoserine. The tract at residues 152–162 (HLRKLRKRLLR) is LDL and other lipoprotein receptors binding. 156–159 (LRKR) is a binding site for heparin. Residues 204–274 (TAALTSQPLQ…GWFEPMMEDI (71 aa)) are lipid-binding and lipoprotein association. 220–227 (GERLRGRL) contributes to the heparin binding site. The interval 262–274 (RLKGWFEPMMEDI) is specificity for association with VLDL.

The protein belongs to the apolipoprotein A1/A4/E family. Homotetramer. May interact with ABCA1; functionally associated with ABCA1 in the biogenesis of HDLs. May interact with APP/A4 amyloid-beta peptide; the interaction is extremely stable in vitro but its physiological significance is unclear. May interact with MAPT. May interact with MAP2. In the cerebrospinal fluid, interacts with secreted SORL1. Interacts with PMEL; this allows the loading of PMEL luminal fragment on ILVs to induce fibril nucleation. APOE exists as multiple glycosylated and sialylated glycoforms within cells and in plasma. The extent of glycosylation and sialylation are tissue and context specific. Post-translationally, glycated in plasma VLDL. In terms of processing, phosphorylated by FAM20C in the extracellular medium.

The protein localises to the secreted. Its subcellular location is the extracellular space. The protein resides in the extracellular matrix. It is found in the extracellular vesicle. It localises to the endosome. The protein localises to the multivesicular body. In terms of biological role, APOE is an apolipoprotein, a protein associating with lipid particles, that mainly functions in lipoprotein-mediated lipid transport between organs via the plasma and interstitial fluids. APOE is a core component of plasma lipoproteins and is involved in their production, conversion and clearance. Apolipoproteins are amphipathic molecules that interact both with lipids of the lipoprotein particle core and the aqueous environment of the plasma. As such, APOE associates with chylomicrons, chylomicron remnants, very low density lipoproteins (VLDL) and intermediate density lipoproteins (IDL) but shows a preferential binding to high-density lipoproteins (HDL). It also binds a wide range of cellular receptors including the LDL receptor/LDLR, the LDL receptor-related proteins LRP1, LRP2 and LRP8 and the very low-density lipoprotein receptor/VLDLR that mediate the cellular uptake of the APOE-containing lipoprotein particles. Finally, APOE also has a heparin-binding activity and binds heparan-sulfate proteoglycans on the surface of cells, a property that supports the capture and the receptor-mediated uptake of APOE-containing lipoproteins by cells. A main function of APOE is to mediate lipoprotein clearance through the uptake of chylomicrons, VLDLs, and HDLs by hepatocytes. APOE is also involved in the biosynthesis by the liver of VLDLs as well as their uptake by peripheral tissues ensuring the delivery of triglycerides and energy storage in muscle, heart and adipose tissues. By participating in the lipoprotein-mediated distribution of lipids among tissues, APOE plays a critical role in plasma and tissues lipid homeostasis. APOE is also involved in two steps of reverse cholesterol transport, the HDLs-mediated transport of cholesterol from peripheral tissues to the liver, and thereby plays an important role in cholesterol homeostasis. First, it is functionally associated with ABCA1 in the biogenesis of HDLs in tissues. Second, it is enriched in circulating HDLs and mediates their uptake by hepatocytes. APOE also plays an important role in lipid transport in the central nervous system, regulating neuron survival and sprouting. This chain is Apolipoprotein E (APOE), found in Dinomys branickii (Pacarana).